We begin with the raw amino-acid sequence, 180 residues long: p-cumate 2,3-dioxygenase system, small oxygenase component (180 aa).

The protein belongs to the bacterial ring-hydroxylating dioxygenase beta subunit family. In terms of assembly, the p-cumate 2,3-dioxygenase multicomponent enzyme system is composed of an electron transfer component and a dioxygenase component (iron sulfur protein (ISP)). The electron transfer component is composed of a ferredoxin reductase (CmtAa) and a ferredoxin (CmtAd), and the dioxygenase component is formed of a large alpha subunit (CmtAb) and a small beta subunit (CmtAc).

It participates in aromatic compound metabolism; p-cumate degradation; acetaldehyde and pyruvate from p-cumate. In terms of biological role, component of the p-cumate 2,3-dioxygenase multicomponent enzyme system which catalyzes the incorporation of both atoms of molecular oxygen into p-cumate to form cis-2,3-dihydroxy-2,3-dihydro-p-cumate. The beta subunit seems to have a structural role in the holoenzyme. Also able to catalyze the cis-dihydroxylation of indole-2-carboxylate and indole-3-carboxylate. The polypeptide is p-cumate 2,3-dioxygenase system, small oxygenase component (Pseudomonas putida (Arthrobacter siderocapsulatus)).